The chain runs to 178 residues: Aminoglycoside 2'-N-acetyltransferase (178 aa).

An N-acetyltransferase domain is found at 8–171 (LHTSQLTLSE…VDFTASLYCD (164 aa)). Substrate contacts are provided by residues aspartate 32 and 79–80 (EA). CoA contacts are provided by residues 81 to 83 (MVV) and 88 to 93 (RRQGIG). Residues serine 114 and 148–149 (EE) each bind substrate.

This sequence belongs to the AAC(2')-I acetyltransferase family. Homodimer.

The enzyme catalyses gentamicin C1a + acetyl-CoA = N(2')-acetylgentamicin C1a + CoA + H(+). Catalyzes the coenzyme A-dependent acetylation of the 2' hydroxyl or amino group of a broad spectrum of aminoglycosides. It confers resistance to aminoglycosides. The protein is Aminoglycoside 2'-N-acetyltransferase (aac) of Providencia stuartii.